Reading from the N-terminus, the 339-residue chain is Protein RecA (339 aa).

73–80 (GPESSGKT) is a binding site for ATP.

This sequence belongs to the RecA family.

Its subcellular location is the cytoplasm. Its function is as follows. Can catalyze the hydrolysis of ATP in the presence of single-stranded DNA, the ATP-dependent uptake of single-stranded DNA by duplex DNA, and the ATP-dependent hybridization of homologous single-stranded DNAs. It interacts with LexA causing its activation and leading to its autocatalytic cleavage. The chain is Protein RecA from Mycoplasmopsis pulmonis (strain UAB CTIP) (Mycoplasma pulmonis).